Consider the following 906-residue polypeptide: Formin-like protein 16 (906 aa).

Positions 1 to 28 are cleaved as a signal peptide; it reads MAPAPSPTPLPLFLLLLLLVGVAPLAAA. Positions 34 to 76 are disordered; that stretch reads QTRFPSTRTPAFATPPPITSPSPSPGTPTATPSSSPPSSSGKR. Residues 46-59 are compositionally biased toward pro residues; it reads ATPPPITSPSPSPG. A compositionally biased stretch (low complexity) spans 60 to 73; sequence TPTATPSSSPPSSS. The chain crosses the membrane as a helical span at residues 81-101; sequence VAVVSTALSSFAVSGLAFFLF. Disordered regions lie at residues 113–149, 161–223, 250–404, 451–474, 677–702, and 834–906; these read AGGAGQHYGGAQGGALTGKRPEREPKRPARGNMVDEN, KEGD…SLDS, AYAR…DQQA, RKTKPADSKDASGGSTSAGLGRSN, GSLAKSTDGGNPAASSTSQGPSREER, and LQQQ…SDEE. The span at 114–128 shows a compositional bias: gly residues; that stretch reads GGAGQHYGGAQGGAL. A compositionally biased stretch (pro residues) spans 174–185; sequence SRRPPQPPPPRP. The span at 186–196 shows a compositional bias: basic and acidic residues; the sequence is YRAERRQDAHE. A compositionally biased stretch (pro residues) spans 270–294; that stretch reads SPSPAPAPAARPASPSPSLPLPPGR. The segment covering 295–310 has biased composition (low complexity); the sequence is ESPSRPQSIAAAAVAS. Pro residues predominate over residues 311-383; that stretch reads PAPPPPPPPK…KGGPPPPPPK (73 aa). In terms of domain architecture, FH2 spans 396–849; that stretch reads PTGSADQQAK…PTPPPSSSQP (454 aa). Composition is skewed to polar residues over residues 463–474 and 677–697; these read GGSTSAGLGRSN and GSLAKSTDGGNPAASSTSQGP. The segment covering 847–866 has biased composition (low complexity); sequence SQPAAPAATTKGAADDAPAP.

The protein belongs to the formin-like family. Class-I subfamily.

It localises to the membrane. This Oryza sativa subsp. japonica (Rice) protein is Formin-like protein 16 (FH16).